Reading from the N-terminus, the 152-residue chain is 2-C-methyl-D-erythritol 2,4-cyclodiphosphate synthase (152 aa).

Asp8 and His10 together coordinate a divalent metal cation. 4-CDP-2-C-methyl-D-erythritol 2-phosphate is bound by residues 8 to 10 and 34 to 35; these read DSH and HS. Position 42 (His42) interacts with a divalent metal cation. 4-CDP-2-C-methyl-D-erythritol 2-phosphate-binding positions include 56 to 58 and 61 to 65; these read DIG and FPDTD.

It belongs to the IspF family. In terms of assembly, homotrimer. The cofactor is a divalent metal cation.

The enzyme catalyses 4-CDP-2-C-methyl-D-erythritol 2-phosphate = 2-C-methyl-D-erythritol 2,4-cyclic diphosphate + CMP. It functions in the pathway isoprenoid biosynthesis; isopentenyl diphosphate biosynthesis via DXP pathway; isopentenyl diphosphate from 1-deoxy-D-xylulose 5-phosphate: step 4/6. Involved in the biosynthesis of isopentenyl diphosphate (IPP) and dimethylallyl diphosphate (DMAPP), two major building blocks of isoprenoid compounds. Catalyzes the conversion of 4-diphosphocytidyl-2-C-methyl-D-erythritol 2-phosphate (CDP-ME2P) to 2-C-methyl-D-erythritol 2,4-cyclodiphosphate (ME-CPP) with a corresponding release of cytidine 5-monophosphate (CMP). The protein is 2-C-methyl-D-erythritol 2,4-cyclodiphosphate synthase of Thermus thermophilus (strain ATCC BAA-163 / DSM 7039 / HB27).